A 269-amino-acid polypeptide reads, in one-letter code: Thiazole synthase (269 aa).

The Schiff-base intermediate with DXP role is filled by lysine 95. 1-deoxy-D-xylulose 5-phosphate contacts are provided by residues glycine 156, 182–183 (AG), and 204–205 (NT).

This sequence belongs to the ThiG family. Homotetramer. Forms heterodimers with either ThiH or ThiS.

It localises to the cytoplasm. The enzyme catalyses [ThiS sulfur-carrier protein]-C-terminal-Gly-aminoethanethioate + 2-iminoacetate + 1-deoxy-D-xylulose 5-phosphate = [ThiS sulfur-carrier protein]-C-terminal Gly-Gly + 2-[(2R,5Z)-2-carboxy-4-methylthiazol-5(2H)-ylidene]ethyl phosphate + 2 H2O + H(+). It participates in cofactor biosynthesis; thiamine diphosphate biosynthesis. Functionally, catalyzes the rearrangement of 1-deoxy-D-xylulose 5-phosphate (DXP) to produce the thiazole phosphate moiety of thiamine. Sulfur is provided by the thiocarboxylate moiety of the carrier protein ThiS. In vitro, sulfur can be provided by H(2)S. This chain is Thiazole synthase, found in Shewanella frigidimarina (strain NCIMB 400).